A 344-amino-acid chain; its full sequence is Probable pectinesterase 67 (344 aa).

Residues 1–23 form the signal peptide; that stretch reads MGHRTRMILVLTLVVMSIWGSDA. Residues Asn43 and Asn151 are each glycosylated (N-linked (GlcNAc...) asparagine). Gln152 contributes to the substrate binding site. Asp196 functions as the Nucleophile in the catalytic mechanism. Arg256 provides a ligand contact to substrate. N-linked (GlcNAc...) asparagine glycosylation is present at Asn282.

It belongs to the pectinesterase family. Expressed in flower buds.

It is found in the secreted. It localises to the cell wall. It catalyses the reaction [(1-&gt;4)-alpha-D-galacturonosyl methyl ester](n) + n H2O = [(1-&gt;4)-alpha-D-galacturonosyl](n) + n methanol + n H(+). It participates in glycan metabolism; pectin degradation; 2-dehydro-3-deoxy-D-gluconate from pectin: step 1/5. Functionally, acts in the modification of cell walls via demethylesterification of cell wall pectin. This Arabidopsis thaliana (Mouse-ear cress) protein is Probable pectinesterase 67 (PME67).